Reading from the N-terminus, the 378-residue chain is N-acetyldiaminopimelate deacetylase (378 aa).

Residue aspartate 65 is part of the active site. Catalysis depends on glutamate 124, which acts as the Proton acceptor.

Belongs to the peptidase M20A family. N-acetyldiaminopimelate deacetylase subfamily.

The catalysed reaction is N-acetyl-(2S,6S)-2,6-diaminopimelate + H2O = (2S,6S)-2,6-diaminopimelate + acetate. It participates in amino-acid biosynthesis; L-lysine biosynthesis via DAP pathway; LL-2,6-diaminopimelate from (S)-tetrahydrodipicolinate (acetylase route): step 3/3. Functionally, catalyzes the conversion of N-acetyl-diaminopimelate to diaminopimelate and acetate. The sequence is that of N-acetyldiaminopimelate deacetylase from Anoxybacillus flavithermus (strain DSM 21510 / WK1).